A 302-amino-acid polypeptide reads, in one-letter code: Ribosomal RNA small subunit methyltransferase H (302 aa).

S-adenosyl-L-methionine contacts are provided by residues 34 to 36, D53, F80, D101, and Q108; that span reads AGH. Residues 283-302 form a disordered region; the sequence is LEENPRSKSAKMRVLKKIER. A compositionally biased stretch (basic residues) spans 290 to 302; that stretch reads KSAKMRVLKKIER.

It belongs to the methyltransferase superfamily. RsmH family.

The protein resides in the cytoplasm. The enzyme catalyses cytidine(1402) in 16S rRNA + S-adenosyl-L-methionine = N(4)-methylcytidine(1402) in 16S rRNA + S-adenosyl-L-homocysteine + H(+). In terms of biological role, specifically methylates the N4 position of cytidine in position 1402 (C1402) of 16S rRNA. The protein is Ribosomal RNA small subunit methyltransferase H of Mycoplasma mobile (strain ATCC 43663 / 163K / NCTC 11711) (Mesomycoplasma mobile).